Reading from the N-terminus, the 161-residue chain is C-type natriuretic peptide (161 aa).

An N-terminal signal peptide occupies residues 1–22 (MFASRLAALGLLLLALVLDGKP). Positions 19–135 (DGKPAPPPQP…GGGGSRRLKG (117 aa)) are disordered. Positions 23–139 (APPPQPLRKA…SRRLKGLPKK (117 aa)) are excised as a propeptide. 2 stretches are compositionally biased toward low complexity: residues 29-60 (LRKA…SSGP) and 76-93 (AAPT…AASR). A compositionally biased stretch (basic and acidic residues) spans 94–104 (LLRDLRPDGKQ). The span at 120-130 (GGGGGGGGGGS) shows a compositional bias: gly residues. Residues Cys-145 and Cys-161 are joined by a disulfide bond.

This sequence belongs to the natriuretic peptide family. As to expression, expressed by the venom gland.

It is found in the secreted. Snake venom natriuretic peptide that has a vasorelaxant activity in rat aortic strips and a diuretic potency in anesthetized rats. May act by activating natriuretic receptors (NPR1 and/or NPR2). The polypeptide is C-type natriuretic peptide (Rhabdophis tigrinus tigrinus (Tiger keelback snake)).